We begin with the raw amino-acid sequence, 33 residues long: Unknown 31.6 kDa protein from 2D-PAGE (33 aa).

This is Unknown 31.6 kDa protein from 2D-PAGE from Onion yellows phytoplasma.